Reading from the N-terminus, the 328-residue chain is Testis-specific serine/threonine-protein kinase 4 (328 aa).

The region spanning 25–293 (YEVGKAIGHG…ILDIIKDSWV (269 aa)) is the Protein kinase domain. Residues 31-39 (IGHGSYGSV) and Lys-54 contribute to the ATP site. Asp-148 (proton acceptor) is an active-site residue. A Phosphothreonine modification is found at Thr-197.

It belongs to the protein kinase superfamily. CAMK Ser/Thr protein kinase family. In terms of assembly, homodimer. Interacts with HSP90; this interaction stabilizes and activates TSSK4. Interacts with ODF2 (via C-terminus); this interaction promotes ODF2 phosphorylation on 'Ser-95'. May interact with CREM. Interacts with CREB1; this interaction facilitates phosphorylation on 'Ser-133'. Interacts with QRICH2. Requires Mg(2+) as cofactor. Post-translationally, activated by autophosphorylation on Thr-197. ODF2 potentiates the autophosphorylation activity of TSSK4 at Thr-197. In terms of processing, ubiquitinated; HSP90 activity negatively regulates ubiquitination and degradation. Expressed only in the testis.

It is found in the cytoplasmic vesicle. The protein resides in the secretory vesicle. The protein localises to the acrosome. It localises to the cell projection. Its subcellular location is the cilium. It is found in the flagellum. It catalyses the reaction L-seryl-[protein] + ATP = O-phospho-L-seryl-[protein] + ADP + H(+). The catalysed reaction is L-threonyl-[protein] + ATP = O-phospho-L-threonyl-[protein] + ADP + H(+). With respect to regulation, activated by phosphorylation on Thr-197. Its function is as follows. Serine/threonine kinase which is involved in male germ cell development and in mature sperm function. May be involved in the Cre/Creb signaling pathway. Phosphorylates CREB1 on 'Ser-133' in vitro and can stimulate Cre/Creb pathway in cells. Phosphorylates CREM on 'Ser-116' in vitro. Phosphorylates ODF2 on 'Ser-95'. The sequence is that of Testis-specific serine/threonine-protein kinase 4 from Homo sapiens (Human).